The following is a 505-amino-acid chain: Glycerol kinase (505 aa).

Thr-13 contacts ADP. Residues Thr-13, Thr-14, and Ser-15 each contribute to the ATP site. Thr-13 is a binding site for sn-glycerol 3-phosphate. Arg-17 provides a ligand contact to ADP. Positions 83, 84, 135, and 247 each coordinate sn-glycerol 3-phosphate. Glycerol contacts are provided by Arg-83, Glu-84, Tyr-135, Asp-247, and Gln-248. ADP is bound by residues Thr-269 and Gly-313. 4 residues coordinate ATP: Thr-269, Gly-313, Gln-317, and Gly-414. ADP contacts are provided by Gly-414 and Asn-418.

It belongs to the FGGY kinase family.

It carries out the reaction glycerol + ATP = sn-glycerol 3-phosphate + ADP + H(+). It participates in polyol metabolism; glycerol degradation via glycerol kinase pathway; sn-glycerol 3-phosphate from glycerol: step 1/1. Inhibited by fructose 1,6-bisphosphate (FBP). Key enzyme in the regulation of glycerol uptake and metabolism. Catalyzes the phosphorylation of glycerol to yield sn-glycerol 3-phosphate. This chain is Glycerol kinase, found in Clavibacter michiganensis subsp. michiganensis (strain NCPPB 382).